A 400-amino-acid polypeptide reads, in one-letter code: Bifunctional enzyme IspD/IspF (400 aa).

Residues 1–235 (MSLWTVLLAA…LAEAAAPPVP (235 aa)) are 2-C-methyl-D-erythritol 4-phosphate cytidylyltransferase. A 2-C-methyl-D-erythritol 2,4-cyclodiphosphate synthase region spans residues 236–400 (VTGYGYDVHR…VALVSGWRRP (165 aa)). Positions 242 and 244 each coordinate a divalent metal cation. Residues 242–244 (DVH) and 276–277 (HS) contribute to the 4-CDP-2-C-methyl-D-erythritol 2-phosphate site. A divalent metal cation is bound at residue H284. 4-CDP-2-C-methyl-D-erythritol 2-phosphate-binding positions include 298–300 (DIG), 303–307 (FPDSN), 374–377 (TTEE), and F381.

In the N-terminal section; belongs to the IspD/TarI cytidylyltransferase family. IspD subfamily. The protein in the C-terminal section; belongs to the IspF family. Requires a divalent metal cation as cofactor.

The catalysed reaction is 2-C-methyl-D-erythritol 4-phosphate + CTP + H(+) = 4-CDP-2-C-methyl-D-erythritol + diphosphate. It catalyses the reaction 4-CDP-2-C-methyl-D-erythritol 2-phosphate = 2-C-methyl-D-erythritol 2,4-cyclic diphosphate + CMP. The protein operates within isoprenoid biosynthesis; isopentenyl diphosphate biosynthesis via DXP pathway; isopentenyl diphosphate from 1-deoxy-D-xylulose 5-phosphate: step 2/6. Its pathway is isoprenoid biosynthesis; isopentenyl diphosphate biosynthesis via DXP pathway; isopentenyl diphosphate from 1-deoxy-D-xylulose 5-phosphate: step 4/6. Bifunctional enzyme that catalyzes the formation of 4-diphosphocytidyl-2-C-methyl-D-erythritol from CTP and 2-C-methyl-D-erythritol 4-phosphate (MEP) (IspD), and catalyzes the conversion of 4-diphosphocytidyl-2-C-methyl-D-erythritol 2-phosphate (CDP-ME2P) to 2-C-methyl-D-erythritol 2,4-cyclodiphosphate (ME-CPP) with a corresponding release of cytidine 5-monophosphate (CMP) (IspF). This chain is Bifunctional enzyme IspD/IspF, found in Solidesulfovibrio magneticus (strain ATCC 700980 / DSM 13731 / RS-1) (Desulfovibrio magneticus).